A 456-amino-acid polypeptide reads, in one-letter code: Proline--tRNA ligase (456 aa).

Belongs to the class-II aminoacyl-tRNA synthetase family. ProS type 3 subfamily. Homodimer.

The protein resides in the cytoplasm. The catalysed reaction is tRNA(Pro) + L-proline + ATP = L-prolyl-tRNA(Pro) + AMP + diphosphate. In terms of biological role, catalyzes the attachment of proline to tRNA(Pro) in a two-step reaction: proline is first activated by ATP to form Pro-AMP and then transferred to the acceptor end of tRNA(Pro). The polypeptide is Proline--tRNA ligase (Methanococcus aeolicus (strain ATCC BAA-1280 / DSM 17508 / OCM 812 / Nankai-3)).